A 428-amino-acid polypeptide reads, in one-letter code: ATP phosphoribosyltransferase regulatory subunit (428 aa).

The protein belongs to the class-II aminoacyl-tRNA synthetase family. HisZ subfamily. In terms of assembly, heteromultimer composed of HisG and HisZ subunits.

The protein localises to the cytoplasm. Its pathway is amino-acid biosynthesis; L-histidine biosynthesis; L-histidine from 5-phospho-alpha-D-ribose 1-diphosphate: step 1/9. Functionally, required for the first step of histidine biosynthesis. May allow the feedback regulation of ATP phosphoribosyltransferase activity by histidine. This chain is ATP phosphoribosyltransferase regulatory subunit, found in Syntrophotalea carbinolica (strain DSM 2380 / NBRC 103641 / GraBd1) (Pelobacter carbinolicus).